Reading from the N-terminus, the 463-residue chain is Rop guanine nucleotide exchange factor 4 (463 aa).

2 disordered regions span residues 1–25 (MESS…YRRT) and 55–87 (GHEE…SDID). The segment covering 59 to 68 (DVSEDAEEPK) has biased composition (acidic residues). Positions 69-78 (DDVVNDVHGD) are enriched in basic and acidic residues. In terms of domain architecture, PRONE spans 84-463 (SDIDSAEDAE…VDRTVRNRDD (380 aa)).

Interacts with ARAC10/ROP11. As to expression, expressed in root vascular tissue and trichoblast cell files. Expressed in root metaxylem cell files. Expressed in guard cells of cotyledons, rosette leaves, sepals, petal, stigmas and siliques. Expressed in root metaxylem cell files.

It is found in the cytoplasm. The protein localises to the cell membrane. Functionally, guanine-nucleotide exchange factor (GEF) that acts as an activator of Rop (Rho of plants) GTPases by promoting the exchange of GDP for GTP. In association with ROPGEF1, acts as a specific regulator of ARAC10/ROP11 function in ABA-mediated stomatal closure. The sequence is that of Rop guanine nucleotide exchange factor 4 (ROPGEF4) from Arabidopsis thaliana (Mouse-ear cress).